Here is a 346-residue protein sequence, read N- to C-terminus: Quinolinate synthase (346 aa).

Residues His47 and Ser68 each contribute to the iminosuccinate site. [4Fe-4S] cluster is bound at residue Cys113. Iminosuccinate contacts are provided by residues 139-141 (YAN) and Ser156. [4Fe-4S] cluster is bound at residue Cys200. Iminosuccinate-binding positions include 226–228 (HPE) and Thr243. Cys297 is a [4Fe-4S] cluster binding site.

Belongs to the quinolinate synthase family. Type 1 subfamily. The cofactor is [4Fe-4S] cluster.

It localises to the cytoplasm. The catalysed reaction is iminosuccinate + dihydroxyacetone phosphate = quinolinate + phosphate + 2 H2O + H(+). It functions in the pathway cofactor biosynthesis; NAD(+) biosynthesis; quinolinate from iminoaspartate: step 1/1. Functionally, catalyzes the condensation of iminoaspartate with dihydroxyacetone phosphate to form quinolinate. The chain is Quinolinate synthase from Photorhabdus laumondii subsp. laumondii (strain DSM 15139 / CIP 105565 / TT01) (Photorhabdus luminescens subsp. laumondii).